Reading from the N-terminus, the 383-residue chain is Glucose-1-phosphate adenylyltransferase (383 aa).

Alpha-D-glucose 1-phosphate is bound by residues tyrosine 100, glycine 165, 180 to 181 (EK), and serine 191.

Belongs to the bacterial/plant glucose-1-phosphate adenylyltransferase family. In terms of assembly, homotetramer.

It carries out the reaction alpha-D-glucose 1-phosphate + ATP + H(+) = ADP-alpha-D-glucose + diphosphate. Its pathway is glycan biosynthesis; glycogen biosynthesis. Involved in the biosynthesis of ADP-glucose, a building block required for the elongation reactions to produce glycogen. Catalyzes the reaction between ATP and alpha-D-glucose 1-phosphate (G1P) to produce pyrophosphate and ADP-Glc. The polypeptide is Glucose-1-phosphate adenylyltransferase (Clostridium kluyveri (strain ATCC 8527 / DSM 555 / NBRC 12016 / NCIMB 10680 / K1)).